The primary structure comprises 1088 residues: Ran-binding protein 17 (1088 aa).

At Ala2 the chain carries N-acetylalanine. At Ser569 the chain carries Phosphoserine.

This sequence belongs to the exportin family. As to quaternary structure, binds to nucleoporins and the GTP-bound form of Ran. Highly expressed in testis, moderately in pancreas and weakly in other tissues studied.

The protein resides in the cytoplasm. It is found in the nucleus. Its subcellular location is the nuclear pore complex. May function as a nuclear transport receptor. This is Ran-binding protein 17 (RANBP17) from Homo sapiens (Human).